A 396-amino-acid polypeptide reads, in one-letter code: MPIRKVMKANEAAAWAAKLAKPKVIAAFPITPSTLIPEKISEFVANGELDAEFIKVESEHSAISACVGAAAAGVRTFTATASQGLALMHEILFIAAGMRLPIVMAIGNRALSAPINIWNDWQDTISQRDTGWMQFYAENNQEALDLILIAYKVAEDERVLLPAMVGFDAFILTHTVEPVEIPDQEVVDEFLGEYEPKHAYIDPARPITQGSLAFPAHYMESRYTVWEAMERAKKVIDEAFAEFEKKFGRKYQKIEEYKTEDADIIFVTMGSLAGTLKEWIDKKREEGYKVGAAKITVYRPFPVEEIRELAKKAKVLAFLEKNITIGLYGAVFTDASAALINESEKPLMVDFIVGLGGRDVTFNQLDEALEIAEKALKEGKVENPINWIGLRWELVK.

As to quaternary structure, heterotetramer of one alpha, one beta, one delta and one gamma chain.

The catalysed reaction is 2 oxidized [2Fe-2S]-[ferredoxin] + pyruvate + CoA = 2 reduced [2Fe-2S]-[ferredoxin] + acetyl-CoA + CO2 + H(+). This is Pyruvate synthase subunit PorA (porA) from Pyrococcus furiosus (strain ATCC 43587 / DSM 3638 / JCM 8422 / Vc1).